We begin with the raw amino-acid sequence, 695 residues long: Phenoloxidase subunit 2 (695 aa).

His-215, His-219, and His-245 together coordinate Cu cation. The active-site Proton acceptor is Glu-353. Cu cation is bound by residues His-368, His-372, and His-408. 2 disulfides stabilise this stretch: Cys-586-Cys-630 and Cys-588-Cys-637.

Heterodimer. Forms a complex with an interleukin 1-like protein as a consequence of a host defense response. Cu(2+) is required as a cofactor. In terms of processing, the N-terminus is blocked. Synthesized by oenocytoids, a type of hemocyte, and released into the hemolymph plasma.

It localises to the secreted. It catalyses the reaction 2 L-dopa + O2 = 2 L-dopaquinone + 2 H2O. The catalysed reaction is L-tyrosine + O2 = L-dopaquinone + H2O. With respect to regulation, activated by immulectin and lipopolysaccharide. In terms of biological role, this is a copper-containing oxidase that functions in the formation of pigments such as melanins and other polyphenolic compounds. Catalyzes the rate-limiting conversions of tyrosine to DOPA, DOPA to DOPA-quinone and possibly 5,6 dihydroxyindole to indole-5'6 quinone. Binds to the surface of hemocytes and is involved in hemocyte melanization. The protein is Phenoloxidase subunit 2 of Manduca sexta (Tobacco hawkmoth).